The chain runs to 255 residues: NAD kinase (255 aa).

Asp44 functions as the Proton acceptor in the catalytic mechanism. Residues 44–45, His49, 114–115, Asp144, Ala152, 155–160, and Gln216 contribute to the NAD(+) site; these read DG, NE, and SAYNLS.

This sequence belongs to the NAD kinase family. Requires a divalent metal cation as cofactor.

Its subcellular location is the cytoplasm. It carries out the reaction NAD(+) + ATP = ADP + NADP(+) + H(+). Functionally, involved in the regulation of the intracellular balance of NAD and NADP, and is a key enzyme in the biosynthesis of NADP. Catalyzes specifically the phosphorylation on 2'-hydroxyl of the adenosine moiety of NAD to yield NADP. This is NAD kinase from Rickettsia prowazekii (strain Madrid E).